Here is a 261-residue protein sequence, read N- to C-terminus: Polycomb group RING finger protein 1 (261 aa).

The RING-type zinc-finger motif lies at 45-84 (CYLCAGYFIDATTITECLHTFCKSCIVKYLQTSKYCPMCN).

As to quaternary structure, component of a PRC1-like complex.

The protein resides in the nucleus. Functionally, component of a Polycomb group (PcG) multiprotein PRC1-like complex, a complex class required to maintain the transcriptionally repressive state of many genes, including Hox genes, throughout development. PcG PRC1 complex acts via chromatin remodeling and modification of histones; it mediates monoubiquitination of histone H2A 'Lys-119', rendering chromatin heritably changed in its expressibility. This chain is Polycomb group RING finger protein 1 (pcgf1), found in Danio rerio (Zebrafish).